Reading from the N-terminus, the 341-residue chain is Putative UPF0607 protein ENSP00000383783 (341 aa).

Residues 75–101 show a composition bias toward basic and acidic residues; it reads EVRAEEPKEATEVKDQVETQGQEDNKR. Disordered stretches follow at residues 75 to 115 and 216 to 278; these read EVRA…TSSL and GLLM…PPPA. The segment covering 234-245 has biased composition (low complexity); sequence SSRSSPSRAASH.

This sequence belongs to the UPF0607 family.

In Homo sapiens (Human), this protein is Putative UPF0607 protein ENSP00000383783.